The sequence spans 302 residues: MRIVLITGISGSGKSVALNALEDAGYYCVDNLPPHVLPELARYLAQDGQRRLAVAIDARSSASLDEMPGLIRELSREHDVRVLFLNASTQALIQRFSETRRRHPLSGSRSHDADVGLLSSLEEAIERERELVAPLAEFGHQIDTSTLRANALRTWVKRFIEQKNNDLMVMFESFGFKRGVPLDADLMFDVRALPNPYYDHQLRPLTGLDQPVIAFLDALPIVHQMIDDIHAFLMKWLPHFRDDNRSYLTVAIGCTGGQHRSVFIAETLAARLARDANVIVRHRDAPVDVDASSRLVSEVDRP.

8-15 (GISGSGKS) is an ATP binding site. 57 to 60 (DARS) serves as a coordination point for GTP.

The protein belongs to the RapZ-like family.

In terms of biological role, displays ATPase and GTPase activities. This is Nucleotide-binding protein Bcenmc03_2806 from Burkholderia orbicola (strain MC0-3).